A 257-amino-acid polypeptide reads, in one-letter code: Phosphate import ATP-binding protein PstB (257 aa).

The ABC transporter domain maps to 11-252; the sequence is IQVRNLNFYY…PAKKQTEDYI (242 aa). 43–50 is an ATP binding site; that stretch reads GPSGCGKS.

Belongs to the ABC transporter superfamily. Phosphate importer (TC 3.A.1.7) family. In terms of assembly, the complex is composed of two ATP-binding proteins (PstB), two transmembrane proteins (PstC and PstA) and a solute-binding protein (PstS).

The protein localises to the cell inner membrane. It carries out the reaction phosphate(out) + ATP + H2O = ADP + 2 phosphate(in) + H(+). Part of the ABC transporter complex PstSACB involved in phosphate import. Responsible for energy coupling to the transport system. The sequence is that of Phosphate import ATP-binding protein PstB from Escherichia coli O6:K15:H31 (strain 536 / UPEC).